We begin with the raw amino-acid sequence, 94 residues long: Protein SKIP34 (94 aa).

A disordered region spans residues 1-27; sequence MCYGHNQSLSSRSSLRRRSHDGEDDSV. A coiled-coil region spans residues 23–61; the sequence is EDDSVVDDLRDRLAETEARLRRARAREAELSRRLEHMKR.

As to quaternary structure, interacts with SPK1B/ASK2.

The sequence is that of Protein SKIP34 (SKIP34) from Arabidopsis thaliana (Mouse-ear cress).